A 975-amino-acid chain; its full sequence is Nesprin-3 (975 aa).

Residues 1 to 925 are Cytoplasmic-facing; sequence MTQQPQDDFD…LGSLFRRACC (925 aa). The Spectrin 1 repeat unit spans residues 220-325; that stretch reads REHEEYQAGV…WEEEEERLRG (106 aa). Residues 617–645 adopt a coiled-coil conformation; the sequence is NHQHKMDQLSSDFQALQRSLEDLVDRCRQ. The stretch at 647–740 is one Spectrin 2 repeat; it reads VQEHCTFSHQ…RELAESWRAL (94 aa). One can recognise a KASH domain in the interval 917–975; it reads GSLFRRACCVALPLQLLLLLFLLLLFLLPIREEDRSCTLANNFARSFTLMLRYNGPPPT. The helical; Anchor for type IV membrane protein transmembrane segment at 926–946 threads the bilayer; sequence VALPLQLLLLLFLLLLFLLPI. The Perinuclear space portion of the chain corresponds to 947 to 975; that stretch reads REEDRSCTLANNFARSFTLMLRYNGPPPT.

This sequence belongs to the nesprin family. Core component of LINC complexes which are composed of inner nuclear membrane SUN domain-containing proteins coupled to outer nuclear membrane KASH domain-containing nesprins. SUN and KASH domain-containing proteins seem to bind each other promiscuously; however, differentially expression of LINC complex constituents can give rise to specific assemblies. Interacts with SUN1 and SUN2; probably forming respective LINC complexes. Interacts with PLEC (via actin-binding domain). Interacts with DST. Interacts with SYNE1 via spectrin repeats. Interacts (via KASH domain) with TOR1A (ATP-bound); the interaction is required for SYNE3 nuclear envelope localization. The disulfid bond with SUN1 or SUN2 is required for stability of the respective LINC complex under tensile forces. In terms of tissue distribution, expressed in aortic endothelial cells (at protein level).

The protein resides in the nucleus outer membrane. Its subcellular location is the nucleus envelope. It localises to the rough endoplasmic reticulum. Functionally, as a component of the LINC (LInker of Nucleoskeleton and Cytoskeleton) complex involved in the connection between the nuclear lamina and the cytoskeleton. The nucleocytoplasmic interactions established by the LINC complex play an important role in the transmission of mechanical forces across the nuclear envelope and in nuclear movement and positioning. Probable anchoring protein which tethers the nucleus to the cytoskeleton by binding PLEC which can associate with the intermediate filament system. Plays a role in the regulation of aortic epithelial cell morphology, and is required for flow-induced centrosome polarization and directional migration in aortic endothelial cells. The protein is Nesprin-3 of Homo sapiens (Human).